A 261-amino-acid chain; its full sequence is Transcription antitermination protein NusB (261 aa).

Positions Ala168–Asp261 are disordered. Positions Val217–Glu228 are enriched in polar residues. A compositionally biased stretch (basic and acidic residues) spans Pro242 to Asp261.

This sequence belongs to the NusB family.

Its function is as follows. Involved in transcription antitermination. Required for transcription of ribosomal RNA (rRNA) genes. Binds specifically to the boxA antiterminator sequence of the ribosomal RNA (rrn) operons. This Cutibacterium acnes (strain DSM 16379 / KPA171202) (Propionibacterium acnes) protein is Transcription antitermination protein NusB.